Consider the following 143-residue polypeptide: Transcriptional regulator SlyA (143 aa).

Residues 2–135 (ESTLGSDLAR…LSGLIDKLEK (134 aa)) enclose the HTH marR-type domain. The segment at residues 49–72 (QIQLAKAIGIEQPSLVRTLDQLEE) is a DNA-binding region (H-T-H motif).

It belongs to the SlyA family. In terms of assembly, homodimer.

Functionally, transcription regulator that can specifically activate or repress expression of target genes. In Yersinia pestis (strain Pestoides F), this protein is Transcriptional regulator SlyA.